Reading from the N-terminus, the 336-residue chain is Large ribosomal subunit protein uL10 (336 aa).

Residues 292–336 (LKEKLSSRAAAPAPEEKEEEVEEEAEEEEEEEEEDAAAGLGALFG) are disordered. The span at 307 to 327 (EKEEEVEEEAEEEEEEEEEDA) shows a compositional bias: acidic residues.

The protein belongs to the universal ribosomal protein uL10 family. In terms of assembly, part of the 50S ribosomal subunit. Forms part of the ribosomal stalk which helps the ribosome interact with GTP-bound translation factors. Forms a heptameric L10(L12)2(L12)2(L12)2 complex, where L10 forms an elongated spine to which the L12 dimers bind in a sequential fashion.

Forms part of the ribosomal stalk, playing a central role in the interaction of the ribosome with GTP-bound translation factors. The protein is Large ribosomal subunit protein uL10 of Methanothermobacter thermautotrophicus (strain ATCC 29096 / DSM 1053 / JCM 10044 / NBRC 100330 / Delta H) (Methanobacterium thermoautotrophicum).